The following is a 222-amino-acid chain: 7-cyano-7-deazaguanine synthase (222 aa).

ATP is bound at residue 14-24 (FSGGQDSTTCL). Cys-190, Cys-199, Cys-202, and Cys-205 together coordinate Zn(2+).

The protein belongs to the QueC family. Homodimer. Zn(2+) is required as a cofactor.

The enzyme catalyses 7-carboxy-7-deazaguanine + NH4(+) + ATP = 7-cyano-7-deazaguanine + ADP + phosphate + H2O + H(+). Its pathway is purine metabolism; 7-cyano-7-deazaguanine biosynthesis. Functionally, catalyzes the ATP-dependent conversion of 7-carboxy-7-deazaguanine (CDG) to 7-cyano-7-deazaguanine (preQ(0)). The polypeptide is 7-cyano-7-deazaguanine synthase (Staphylococcus aureus (strain bovine RF122 / ET3-1)).